The primary structure comprises 726 residues: ORC ubiquitin ligase 1 (726 aa).

The RING-type; degenerate zinc-finger motif lies at 18 to 56 (CHICLGKVRQPVICINNHVFCSICIDLWLKNNSQCPACR). 2 coiled-coil regions span residues 87–129 (LRKT…TILD) and 155–270 (ETVA…MNSI). At Ser-210 the chain carries Phosphoserine. 2 disordered regions span residues 276-334 (SADG…TSKA) and 436-460 (NVSNKDSSEDDISRSENEKKSECFS). Over residues 280–290 (KGSKGSEEDVV) the composition is skewed to basic and acidic residues. Positions 304–318 (SSTSSSSHLAKPSSS) are enriched in low complexity. Residues 319–334 (RLCDTSSARQESTSKA) show a composition bias toward polar residues. Residues 446–457 (DISRSENEKKSE) are compositionally biased toward basic and acidic residues. Ser-526, Ser-553, Ser-561, Ser-568, and Ser-570 each carry phosphoserine. 2 disordered regions span residues 570–602 (SSQGSEFLEEPDKLEEKTELNLSKGSLTNDQLE) and 687–726 (QSPWSTSFVPEKRNKNVNQSTKRKIQSSLSSASPSKATKS). The segment covering 579–588 (EPDKLEEKTE) has biased composition (basic and acidic residues). Over residues 589–602 (LNLSKGSLTNDQLE) the composition is skewed to polar residues. A compositionally biased stretch (low complexity) spans 713-726 (SSLSSASPSKATKS). Phosphoserine is present on residues Ser-719 and Ser-721.

Associates with ORC complex. Binds to chromatin; association is cell cycle-regulated, absent from mitotic chromosomes, is associated with chromatin from G1 and partially released from chromatin from mid S-phase. Post-translationally, auto-ubiquitinated.

It is found in the chromosome. The catalysed reaction is S-ubiquitinyl-[E2 ubiquitin-conjugating enzyme]-L-cysteine + [acceptor protein]-L-lysine = [E2 ubiquitin-conjugating enzyme]-L-cysteine + N(6)-ubiquitinyl-[acceptor protein]-L-lysine.. Functionally, E3 ubiquitin ligase essential for DNA replication origin activation during S phase. Acts as a replication origin selector which selects the origins to be fired and catalyzes the multi-mono-ubiquitination of a subset of chromatin-bound ORC3 and ORC5 during S-phase. The protein is ORC ubiquitin ligase 1 of Homo sapiens (Human).